The chain runs to 368 residues: Endophilin-A2 (368 aa).

The interval 1 to 21 (MSVAGLKKQFYKASQLVSEKV) is membrane-binding amphipathic helix. The region spanning 18–249 (SEKVGGAEGT…LKRRVREASS (232 aa)) is the BAR domain. A required for dimerization upon membrane association region spans residues 60-87 (PNPASRAKLTMLNTVSKIRGQVKNPGYP). Residues 180–250 (DEELRQALEK…KRRVREASSR (71 aa)) are a coiled coil. Positions 218 to 254 (LVDAQLDYHRQAVQILEELADKLKRRVREASSRPKRE) are interaction with ARC. Positions 244–307 (VREASSRPKR…MPSKSMPPLD (64 aa)) are disordered. Basic and acidic residues predominate over residues 245–263 (REASSRPKREFKPRPREPF). Phosphoserine is present on residues Ser-288 and Ser-292. The SH3 domain occupies 306-365 (LDQPSCKALYDFEPENDGELGFREGDLITLTNQIDENWYEGMLHGQSGFFPLSYVQVLVP). A Phosphotyrosine modification is found at Tyr-315.

Belongs to the endophilin family. In terms of assembly, interacts with ARC, SYNJ1 and DNM1. Interacts with PDCD6IP. Interacts with BIN2.

The protein resides in the cytoplasm. Its subcellular location is the early endosome membrane. It is found in the cell projection. The protein localises to the podosome. Implicated in endocytosis. May recruit other proteins to membranes with high curvature. The polypeptide is Endophilin-A2 (Sh3gl1) (Mus musculus (Mouse)).